Reading from the N-terminus, the 473-residue chain is Bifunctional protein GlmU (473 aa).

Residues 1-226 (MRAPVAVVIL…AGEASGINDL (226 aa)) are pyrophosphorylase. UDP-N-acetyl-alpha-D-glucosamine is bound by residues 10 to 13 (LAAG), lysine 24, glutamine 75, 80 to 81 (GT), 102 to 104 (YGD), glycine 136, glutamate 151, asparagine 166, and asparagine 224. A Mg(2+)-binding site is contributed by aspartate 104. Residue asparagine 224 participates in Mg(2+) binding. The interval 227–247 (VQLAEVEEAFQRRWARRLLQG) is linker. The N-acetyltransferase stretch occupies residues 248-473 (GLRLVAPHRF…TPASGGAKEE (226 aa)). Residues arginine 330 and lysine 348 each coordinate UDP-N-acetyl-alpha-D-glucosamine. The Proton acceptor role is filled by histidine 360. Residues tyrosine 363 and asparagine 374 each coordinate UDP-N-acetyl-alpha-D-glucosamine. Acetyl-CoA is bound by residues alanine 377, 383-384 (NY), serine 402, alanine 420, and arginine 437. The interval 439–473 (RARTIPGWQHPGLTGRRGPPDDNDATPASGGAKEE) is disordered.

In the N-terminal section; belongs to the N-acetylglucosamine-1-phosphate uridyltransferase family. The protein in the C-terminal section; belongs to the transferase hexapeptide repeat family. In terms of assembly, homotrimer. Mg(2+) serves as cofactor.

The protein localises to the cytoplasm. The enzyme catalyses alpha-D-glucosamine 1-phosphate + acetyl-CoA = N-acetyl-alpha-D-glucosamine 1-phosphate + CoA + H(+). The catalysed reaction is N-acetyl-alpha-D-glucosamine 1-phosphate + UTP + H(+) = UDP-N-acetyl-alpha-D-glucosamine + diphosphate. It functions in the pathway nucleotide-sugar biosynthesis; UDP-N-acetyl-alpha-D-glucosamine biosynthesis; N-acetyl-alpha-D-glucosamine 1-phosphate from alpha-D-glucosamine 6-phosphate (route II): step 2/2. It participates in nucleotide-sugar biosynthesis; UDP-N-acetyl-alpha-D-glucosamine biosynthesis; UDP-N-acetyl-alpha-D-glucosamine from N-acetyl-alpha-D-glucosamine 1-phosphate: step 1/1. The protein operates within bacterial outer membrane biogenesis; LPS lipid A biosynthesis. Catalyzes the last two sequential reactions in the de novo biosynthetic pathway for UDP-N-acetylglucosamine (UDP-GlcNAc). The C-terminal domain catalyzes the transfer of acetyl group from acetyl coenzyme A to glucosamine-1-phosphate (GlcN-1-P) to produce N-acetylglucosamine-1-phosphate (GlcNAc-1-P), which is converted into UDP-GlcNAc by the transfer of uridine 5-monophosphate (from uridine 5-triphosphate), a reaction catalyzed by the N-terminal domain. This is Bifunctional protein GlmU from Halorhodospira halophila (strain DSM 244 / SL1) (Ectothiorhodospira halophila (strain DSM 244 / SL1)).